A 121-amino-acid polypeptide reads, in one-letter code: Large ribosomal subunit protein uL18 (121 aa).

Belongs to the universal ribosomal protein uL18 family. In terms of assembly, part of the 50S ribosomal subunit; part of the 5S rRNA/L5/L18/L25 subcomplex. Contacts the 5S and 23S rRNAs.

Its function is as follows. This is one of the proteins that bind and probably mediate the attachment of the 5S RNA into the large ribosomal subunit, where it forms part of the central protuberance. The sequence is that of Large ribosomal subunit protein uL18 from Pelobacter propionicus (strain DSM 2379 / NBRC 103807 / OttBd1).